A 152-amino-acid polypeptide reads, in one-letter code: Large ribosomal subunit protein uL30 (152 aa).

This sequence belongs to the universal ribosomal protein uL30 family. As to quaternary structure, part of the 50S ribosomal subunit.

The polypeptide is Large ribosomal subunit protein uL30 (Archaeoglobus fulgidus (strain ATCC 49558 / DSM 4304 / JCM 9628 / NBRC 100126 / VC-16)).